The chain runs to 694 residues: Elongation factor G (694 aa).

Residues lysine 6–threonine 288 form the tr-type G domain. GTP-binding positions include alanine 15 to threonine 22, aspartate 86 to histidine 90, and asparagine 140 to aspartate 143.

This sequence belongs to the TRAFAC class translation factor GTPase superfamily. Classic translation factor GTPase family. EF-G/EF-2 subfamily.

The protein resides in the cytoplasm. Its function is as follows. Catalyzes the GTP-dependent ribosomal translocation step during translation elongation. During this step, the ribosome changes from the pre-translocational (PRE) to the post-translocational (POST) state as the newly formed A-site-bound peptidyl-tRNA and P-site-bound deacylated tRNA move to the P and E sites, respectively. Catalyzes the coordinated movement of the two tRNA molecules, the mRNA and conformational changes in the ribosome. This chain is Elongation factor G, found in Legionella pneumophila (strain Corby).